The chain runs to 365 residues: Myocyte-specific enhancer factor 2B (365 aa).

One can recognise an MADS-box domain in the interval 3 to 57 (RKKIQISRILDQRNRQVTFTKRKFGLMKKAYELSVLCDCEIALIIFNSANRLFQY). Positions 58 to 86 (ASTDMDRVLLKYTEYSEPHESRTNTDILE) form a DNA-binding region, mef2-type. Disordered stretches follow at residues 94-124 (GLDG…GDPA), 142-309 (VVYG…SPGP), and 321-365 (AGCP…KTQQ). Residues 98–108 (PELEPDEGPEE) show a composition bias toward acidic residues. Positions 223-240 (NTSRSLYSGLQNPCSTAT) are enriched in polar residues. Low complexity-rich tracts occupy residues 277–289 (PQSA…SLRP) and 326–346 (PTAG…SPGT). A compositionally biased stretch (polar residues) spans 354–365 (TSLQASSEKTQQ).

Belongs to the MEF2 family. In terms of assembly, interacts with HDAC7. Heterodimer. Interacts with HDAC9. In terms of tissue distribution, expressed in skeletal and cardiac muscle and brain.

It is found in the nucleus. Functionally, transcriptional activator which binds specifically to the MEF2 element, 5'-YTA[AT](4)TAR-3', found in numerous muscle-specific genes. Activates transcription via this element. May be involved in muscle-specific and/or growth factor-related transcription. In Homo sapiens (Human), this protein is Myocyte-specific enhancer factor 2B (MEF2B).